The following is a 91-amino-acid chain: Small ribosomal subunit protein bS20 (91 aa).

Positions 1 to 28 are disordered; sequence MPNIKSAIKRTKTIEKRRAHRASQKSDL. Positions 7–23 are enriched in basic residues; the sequence is AIKRTKTIEKRRAHRAS.

It belongs to the bacterial ribosomal protein bS20 family.

Its function is as follows. Binds directly to 16S ribosomal RNA. This is Small ribosomal subunit protein bS20 from Brevibacillus brevis (strain 47 / JCM 6285 / NBRC 100599).